The following is a 473-amino-acid chain: H(+)/Cl(-) exchange transporter ClcA (473 aa).

Topologically, residues 1-32 (MKTDTSTFLAQQIVRLRRRDQIRRLMQRDKTP) are cytoplasmic. Residues 33 to 69 (LAILFMAAVVGTLTGLVGVAFEKTVSWVQNMRIGALV) form a helical membrane-spanning segment. Residues 70 to 76 (QVADHAF) are Periplasmic-facing. The helical transmembrane segment at 77-100 (LLWPLAFILSALLAMVGYFLVRKF) threads the bilayer. A Selectivity filter part_1 motif is present at residues 106–110 (GSGIP). Residue S107 coordinates chloride. An intramembrane region (helical) is located at residues 109-116 (IPEIEGAL). Residues 117-123 (EELRPVR) lie on the Cytoplasmic side of the membrane. Transmembrane regions (helical) follow at residues 124 to 141 (WWRV…TLGA) and 148 to 166 (EGPT…LDVF). The Selectivity filter part_2 signature appears at 146–150 (GREGP). Residues 167–176 (RMRSAEARHT) are Cytoplasmic-facing. Intramembrane regions (helical) lie at residues 177–189 (LLAT…LSAA) and 193–201 (PLAGILFII). Residues 202 to 214 (EEMRPQFRYNLIS) lie on the Cytoplasmic side of the membrane. Residues 215–232 (IKAVFTGVIMSSIVFRIF) traverse the membrane as a helical segment. The Periplasmic segment spans residues 233-252 (NGEAPIIEVGKLSDAPVNTL). Residues 253-281 (WLYLILGIIFGCVGPVFNSLVLRTQDMFQ) traverse the membrane as a helical segment. Residues 282 to 287 (RFHGGE) are Cytoplasmic-facing. Residues 288–309 (IKKWVLMGGAIGGLCGILGLIE) form a helical membrane-spanning segment. At 310–329 (PAAAGGGFNLIPIAAAGNFS) the chain is on the periplasmic side. 2 helical membrane passes run 330-349 (VGLL…LCFS) and 355-376 (GIFA…MAAA). The Selectivity filter part_3 motif lies at 355–359 (GIFAP). I356 and F357 together coordinate chloride. Topologically, residues 377–386 (VLFPQYHLEA) are periplasmic. The helical intramembrane region spans 387 to 401 (GTFAIAGMGALMAAS). Residues 402–404 (VRA) constitute an intramembrane region (note=Loop between two helices). Residues 405–416 (PLTGIVLVLEMT) constitute an intramembrane region (helical). Positions 417–421 (DNYQL) form an intramembrane region, note=Loop between two helices. The helical transmembrane segment at 422–438 (ILPMIITCLGATLLAQF) threads the bilayer. The Cytoplasmic segment spans residues 439-473 (LGGKPLYSTILARTLAKQDAEQAAKNQNAPAGENT). Position 445 (Y445) interacts with chloride.

This sequence belongs to the chloride channel (TC 2.A.49) family. ClcA subfamily. In terms of assembly, homodimer.

The protein localises to the cell inner membrane. It catalyses the reaction 2 chloride(in) + H(+)(out) = 2 chloride(out) + H(+)(in). Proton-coupled chloride transporter. Functions as antiport system and exchanges two chloride ions for 1 proton. Probably acts as an electrical shunt for an outwardly-directed proton pump that is linked to amino acid decarboxylation, as part of the extreme acid resistance (XAR) response. The polypeptide is H(+)/Cl(-) exchange transporter ClcA (Salmonella typhi).